The sequence spans 142 residues: Dromaiocalcin-2 (142 aa).

Disulfide bonds link C6-C17, C34-C138, and C113-C130. Positions 13-139 (FDGRCYGFFP…CSDRKPFICA (127 aa)) constitute a C-type lectin domain. 2 positions are modified to phosphoserine: S62 and S68.

A minor form with some unmodified Ser-68 and partial phosphorylation of Ser-66 may also occur.

The protein localises to the secreted. Its subcellular location is the extracellular space. It is found in the extracellular matrix. This Dromaius novaehollandiae (Emu) protein is Dromaiocalcin-2.